The sequence spans 79 residues: Acyl carrier protein (79 aa).

The Carrier domain occupies 2-77 (SDIEARVKKI…NAIDYANTHH (76 aa)). Serine 37 carries the post-translational modification O-(pantetheine 4'-phosphoryl)serine.

Belongs to the acyl carrier protein (ACP) family. Post-translationally, 4'-phosphopantetheine is transferred from CoA to a specific serine of apo-ACP by AcpS. This modification is essential for activity because fatty acids are bound in thioester linkage to the sulfhydryl of the prosthetic group.

It is found in the cytoplasm. It functions in the pathway lipid metabolism; fatty acid biosynthesis. Carrier of the growing fatty acid chain in fatty acid biosynthesis. This chain is Acyl carrier protein, found in Polaromonas naphthalenivorans (strain CJ2).